Here is a 126-residue protein sequence, read N- to C-terminus: MSDPRYQIDVSVETRYLPEQSQPEQNRYVFAYSVTIRNNGLLPAQLLSRHWLITDGDGHVQEVRGPGVIGTQPLLGPGQSHNYDSSTLLATQVGTMQGSYQMVAEDGHAFDAPIRPFRLAVPGALH.

In terms of domain architecture, ApaG spans 2-126; it reads SDPRYQIDVS…FRLAVPGALH (125 aa).

The sequence is that of Protein ApaG from Azotobacter vinelandii (strain DJ / ATCC BAA-1303).